The chain runs to 475 residues: MATASQGKVTQVIGAVVDVQFDGGLPPILNALETENNGKRLVLEVAQHLGESTVRTIAMDATEGLVRGARVTDTGSPISVPVGDATLGRILNVIGEPIDEKGDLGEASTRAIHQPAPTFAEQSTTSEILVTGIKVIDLLAPYSKGGKIGLFGGAGVGKTVLIMELINNIAKVHSGYSVFAGVGERTREGNDLYHEMIESGVIKIDNLSESKVALVYGQMNEPPGARARVALTGLTLAEQFRDQSGTDVLFFVDNIFRFTQAGSEVSALLGRIPSAVGYQPTLATDMGALQERITSTKAGSITSVQAIYVPADDLTDPAPATSFAHLDATTVLSRAISELGIYPAVDPLDSTSRILDPQIVGEEHYNVARAVQGILQRYKSLQDIIAILGMDELSEEDKLSVARARKIQRFLSQPFDVAKVFTGSDGVQVPLEKTIASFKAVVNGEYDHLPEAAFYMVGDIEDVIAKAQRLAAQAA.

ATP is bound at residue glycine 152–threonine 159.

Belongs to the ATPase alpha/beta chains family. F-type ATPases have 2 components, CF(1) - the catalytic core - and CF(0) - the membrane proton channel. CF(1) has five subunits: alpha(3), beta(3), gamma(1), delta(1), epsilon(1). CF(0) has four main subunits: a(1), b(1), b'(1) and c(9-12).

The protein localises to the cell inner membrane. It catalyses the reaction ATP + H2O + 4 H(+)(in) = ADP + phosphate + 5 H(+)(out). In terms of biological role, produces ATP from ADP in the presence of a proton gradient across the membrane. The catalytic sites are hosted primarily by the beta subunits. The chain is ATP synthase subunit beta 1 from Cereibacter sphaeroides (strain ATCC 17029 / ATH 2.4.9) (Rhodobacter sphaeroides).